Consider the following 183-residue polypeptide: Probable RNA 2'-phosphotransferase (183 aa).

The protein belongs to the KptA/TPT1 family.

In terms of biological role, removes the 2'-phosphate from RNA via an intermediate in which the phosphate is ADP-ribosylated by NAD followed by a presumed transesterification to release the RNA and generate ADP-ribose 1''-2''-cyclic phosphate (APPR&gt;P). May function as an ADP-ribosylase. The sequence is that of Probable RNA 2'-phosphotransferase from Pyrococcus furiosus (strain ATCC 43587 / DSM 3638 / JCM 8422 / Vc1).